The chain runs to 55 residues: Large ribosomal subunit protein bL33c (55 aa).

This sequence belongs to the bacterial ribosomal protein bL33 family.

It is found in the plastid. It localises to the chloroplast. This chain is Large ribosomal subunit protein bL33c, found in Emiliania huxleyi (Coccolithophore).